The primary structure comprises 596 residues: Bromodomain-containing protein 9 (596 aa).

The span at 1–10 (MGKKHKKHKS) shows a compositional bias: basic residues. Disordered regions lie at residues 1–31 (MGKK…QYYV) and 49–119 (EVTE…SEGE). The segment covering 61–73 (SFYEDRSDHERER) has biased composition (basic and acidic residues). Over residues 74–84 (HKEKKKKKKKK) the composition is skewed to basic residues. The span at 85–98 (SEKEKDKYLDEDER) shows a compositional bias: basic and acidic residues. A compositionally biased stretch (basic residues) spans 99 to 109 (RRRKEEKKRKR). Residues 148-252 (NESTPLQQLL…HTGFKMMSKQ (105 aa)) enclose the Bromo domain. The histone H4K5ac H4K8ac and histone H4K5bu H4K8bu binding stretch occupies residues 226 to 228 (TYN). Over residues 537–547 (DFHDVHNDRGG) the composition is skewed to basic and acidic residues. Residues 537–596 (DFHDVHNDRGGSRPSSSSSVSNNSERDHHLGSPSRISVGEQQDIHDPYEFLQSPETENQN) form a disordered region. Positions 548 to 559 (SRPSSSSSVSNN) are enriched in low complexity.

In terms of assembly, binds acetylated histones H3 and H4. Binds butyrylated histone H4.

The protein localises to the nucleus. Plays a role in chromatin remodeling and regulation of transcription. Acts as a chromatin reader that recognizes and binds acylated histones: binds histones that are acetylated and/or butyrylated. This Xenopus tropicalis (Western clawed frog) protein is Bromodomain-containing protein 9 (brd9).